The following is a 295-amino-acid chain: Iron-sulfur cluster carrier protein (295 aa).

38–45 contacts ATP; that stretch reads GKGGVGKS.

This sequence belongs to the Mrp/NBP35 ATP-binding proteins family. In terms of assembly, homodimer.

Its function is as follows. Binds and transfers iron-sulfur (Fe-S) clusters to target apoproteins. Can hydrolyze ATP. This Pyrococcus horikoshii (strain ATCC 700860 / DSM 12428 / JCM 9974 / NBRC 100139 / OT-3) protein is Iron-sulfur cluster carrier protein.